The chain runs to 270 residues: MELSSASAILSHSSSAAQLLRPKLGFIDLLPRRAMIVSSPSSSLPRFLRMESQSQLRQSISCSASSSSSMALGRIGEVKRVTKETNVSVKINLDGTGVADSSSGIPFLDHMLDQLASHGLFDVHVRATGDVHIDDHHTNEDIALAIGTALLKALGERKGINRFGDFTAPLDEALIHVSLDLSGRPYLGYNLEIPTQRVGTYDTQLVEHFFQSLVNTSGMTLHIRQLAGENSHHIIEATFKAFARALRQATETDPRRGGTIPSSKGVLSRS.

A chloroplast-targeting transit peptide spans 1-62 (MELSSASAIL…QSQLRQSISC (62 aa)). An N-acetylserine modification is found at serine 63. Residues glutamate 84, 110–118 (HMLDQLASH), 136–140 (HHTNE), arginine 162, and arginine 184 each bind substrate. The Mn(2+) site is built by histidine 110, histidine 136, histidine 137, and glutamate 140. Residues histidine 208, histidine 232, histidine 233, and glutamate 236 each coordinate Mn(2+). Residues 232–240 (HHIIEATFK) and 262–264 (SSK) each bind substrate. The tract at residues 250–270 (TETDPRRGGTIPSSKGVLSRS) is disordered.

The protein belongs to the imidazoleglycerol-phosphate dehydratase family. The cofactor is Mn(2+).

It localises to the plastid. The protein resides in the chloroplast. It carries out the reaction D-erythro-1-(imidazol-4-yl)glycerol 3-phosphate = 3-(imidazol-4-yl)-2-oxopropyl phosphate + H2O. It functions in the pathway amino-acid biosynthesis; L-histidine biosynthesis; L-histidine from 5-phospho-alpha-D-ribose 1-diphosphate: step 6/9. The polypeptide is Imidazoleglycerol-phosphate dehydratase 1, chloroplastic (Arabidopsis thaliana (Mouse-ear cress)).